We begin with the raw amino-acid sequence, 445 residues long: MTCDKHTAQTIGKGDLVVVVGAGRSGMAAARLLHRMGARVRLLERNADGVPADFVRWAAEAGVEIATGDHAPTQFEGARAVVPSPGMAVSKLRPLLAQGPDAPEIMAEMELAWRQLDGEPVLAVTGTSGKTTTVSLCAAMLRAQGLSVFLGGNIGTPLSEYVLSVAHGGADGQGRADVLVIEISSFQLQACTTFRPRVAMLLNISENHLDYHADMAEYIDAKFRLFRCMEEGDLAIFGQGVRDLVAARDLKPRTLFFDAAARRFPRTCLLGGHNQANIEAAWQACREFGVTPEAAEKAVADFAPMEHRLEAVAERNGVLWVNDSKCTTVEALRVALQAFDRPVVLMVGGKFKGGDLASLLPLLCGRVRAVVGFGASREHFEGAWMGQGDFPMSWHPALEPAVAEAAALARPGDAVVMAPATSSFDLFANYKERGHAFRRAVEALP.

Residue 126 to 132 (GTSGKTT) participates in ATP binding.

This sequence belongs to the MurCDEF family.

Its subcellular location is the cytoplasm. The catalysed reaction is UDP-N-acetyl-alpha-D-muramoyl-L-alanine + D-glutamate + ATP = UDP-N-acetyl-alpha-D-muramoyl-L-alanyl-D-glutamate + ADP + phosphate + H(+). It functions in the pathway cell wall biogenesis; peptidoglycan biosynthesis. Functionally, cell wall formation. Catalyzes the addition of glutamate to the nucleotide precursor UDP-N-acetylmuramoyl-L-alanine (UMA). The polypeptide is UDP-N-acetylmuramoylalanine--D-glutamate ligase (Nitratidesulfovibrio vulgaris (strain DSM 19637 / Miyazaki F) (Desulfovibrio vulgaris)).